We begin with the raw amino-acid sequence, 699 residues long: SPS-sensor serine protease component SSY5 (699 aa).

Disordered stretches follow at residues Met1 to Phe113 and Val129 to Arg158. Positions Met1–Ala381 are excised as a propeptide. Residues Asn8–Thr18 are compositionally biased toward basic and acidic residues. The span at Asn24–Gly38 shows a compositional bias: polar residues. Residues Asn39–Asn51 show a composition bias toward basic and acidic residues. Residues Ser61 to Arg78 show a composition bias toward low complexity. A compositionally biased stretch (polar residues) spans Thr83–Glu93. A compositionally biased stretch (low complexity) spans Ser144–Ser154. Positions Phe459 to Gly699 are serine protease. Catalysis depends on charge relay system residues His465, Asp545, and Ser640.

This sequence belongs to the peptidase S64 family. As to quaternary structure, component of the plasma membrane SPS (SSY1-PTR3-SSY5) amino acid sensor complex. In terms of processing, the propeptide is autoproteolytically cleaved from the catalytic domain but remains associated, forming an inactive protease complex. This processing occurs even in the absence of signaling.

Its subcellular location is the cell membrane. Functionally, protease component of the SPS-sensor system, which regulates the expression of several amino acid-metabolizing enzymes and amino acid- and peptide-permeases in response to extracellular amino acid levels by controlling the activity of two transcription factors, STP1 and STP2. Catalyzes the activation of these transcription factors, which are synthesized as latent cytoplasmic precursors, by proteolytic removal of an N-terminal inhibitory domain containing cytoplasmic retention motifs. SSY5 binds as an inactive protease complex to STP1. In response to extracellular amino acids and dependent on the other SPS-sensor components, the inhibitory propeptide is induced to dissociate, and thereby enables the catalytic domain to process STP1. The protein is SPS-sensor serine protease component SSY5 (SSY5) of Saccharomyces cerevisiae (strain AWRI1631) (Baker's yeast).